The sequence spans 210 residues: MLTRHCNRLGLQIENKFVFRSSSWNCVRRIGKIACNENKYRYEMTSTEEDIDSFFSRVFGEKNYISDKSLREQIVTHKSYKHGLKRYNEPFVSVGNAVIDVCLLNHYLESGNFSTIPSYKDLVNLRSPARLAEVAKKWNPETATQCILPLKGPNSPSSSSFEKIYSSIVSGLVAVVYFQKGGVEAMNFCKKSIISDLTKDFVRPNTVHNQ.

The N-terminal 59 residues, 1–59, are a transit peptide targeting the mitochondrion; it reads MLTRHCNRLGLQIENKFVFRSSSWNCVRRIGKIACNENKYRYEMTSTEEDIDSFFSRVF.

Belongs to the ribonuclease III family. Mitochondrion-specific ribosomal protein mL57 subfamily. Component of the mitochondrial large ribosomal subunit (mt-LSU). Mature yeast 74S mitochondrial ribosomes consist of a small (37S) and a large (54S) subunit. The 37S small subunit contains a 15S ribosomal RNA (15S mt-rRNA) and at least 32 different proteins. The 54S large subunit contains a 21S rRNA (21S mt-rRNA) and at least 45 different proteins. mL57 forms a heterodimer with mL44 and stabilizes rRNA expansion segments 1/2 at a membrane-facing protuberance close to the point of attachment of the ribosome to the translocon in the membrane.

Its subcellular location is the mitochondrion. Functionally, component of the mitochondrial ribosome (mitoribosome), a dedicated translation machinery responsible for the synthesis of mitochondrial genome-encoded proteins, including at least some of the essential transmembrane subunits of the mitochondrial respiratory chain. The mitoribosomes are attached to the mitochondrial inner membrane and translation products are cotranslationally integrated into the membrane. This Schizosaccharomyces pombe (strain 972 / ATCC 24843) (Fission yeast) protein is Large ribosomal subunit protein mL57 (mrp15).